Consider the following 457-residue polypeptide: MLQRNFHIITFGCQMNTNDSFWLSCSLQKKGFQEVSLEDASIIIINTCSVREKPEQKVYSILGKIRHATKNNPDSFVVIAGCVAQQLGATFFEKFPQVRLVSGSDGIAMAPDAIERLYAEPDLKLNLTDFSEYYPEREYAFSKLTLSNNNTLALMAYVNIMQGCDNYCTYCIVPYTRGKQKSRSVQAIVEECQQLIDSGVKEIVLLGQNVNAYGLDKDKNSPANGVNFAMLVHTIASLPGLERLRFFSAHPKEFSSELIDLFGEFSTLCPRLHLPLQSGSDKILRRMGRKYSMDEYISIITKLKKVRPDIALSTDFIVGFPGETEEDFLQTLQSINTIKFMSSFSFCYSDRPGTRSSTFSNKVDHEVKIKRLEQLQATQLEHSTSWLKSRVGVETTVLLEKVSRKKAEDNNSWQGRDPWGNVVNVILPQSTNISNTLLPVRIIASKKHSLVAEPLII.

Residues 4-119 (RNFHIITFGC…APDAIERLYA (116 aa)) form the MTTase N-terminal domain. 6 residues coordinate [4Fe-4S] cluster: C13, C48, C82, C164, C168, and C171. A Radical SAM core domain is found at 150-385 (NTLALMAYVN…QATQLEHSTS (236 aa)). A TRAM domain is found at 388–456 (KSRVGVETTV…KHSLVAEPLI (69 aa)).

The protein belongs to the methylthiotransferase family. MiaB subfamily. Monomer. [4Fe-4S] cluster serves as cofactor.

The protein resides in the cytoplasm. It catalyses the reaction N(6)-dimethylallyladenosine(37) in tRNA + (sulfur carrier)-SH + AH2 + 2 S-adenosyl-L-methionine = 2-methylsulfanyl-N(6)-dimethylallyladenosine(37) in tRNA + (sulfur carrier)-H + 5'-deoxyadenosine + L-methionine + A + S-adenosyl-L-homocysteine + 2 H(+). Its function is as follows. Catalyzes the methylthiolation of N6-(dimethylallyl)adenosine (i(6)A), leading to the formation of 2-methylthio-N6-(dimethylallyl)adenosine (ms(2)i(6)A) at position 37 in tRNAs that read codons beginning with uridine. This chain is tRNA-2-methylthio-N(6)-dimethylallyladenosine synthase, found in Lawsonia intracellularis (strain PHE/MN1-00).